We begin with the raw amino-acid sequence, 185 residues long: Ribosome-recycling factor (185 aa).

The protein belongs to the RRF family.

The protein resides in the cytoplasm. In terms of biological role, responsible for the release of ribosomes from messenger RNA at the termination of protein biosynthesis. May increase the efficiency of translation by recycling ribosomes from one round of translation to another. The chain is Ribosome-recycling factor from Shewanella sp. (strain MR-4).